Consider the following 449-residue polypeptide: Cysteine--tRNA ligase (449 aa).

Cys29 is a binding site for Zn(2+). The 'HIGH' region motif lies at 31-41 (PTVYDHLHIGN). The Zn(2+) site is built by Cys211, His236, and Glu240. Residues 269–273 (KMSKS) carry the 'KMSKS' region motif. Lys272 lines the ATP pocket.

This sequence belongs to the class-I aminoacyl-tRNA synthetase family. As to quaternary structure, monomer. The cofactor is Zn(2+).

The protein resides in the cytoplasm. It carries out the reaction tRNA(Cys) + L-cysteine + ATP = L-cysteinyl-tRNA(Cys) + AMP + diphosphate. The sequence is that of Cysteine--tRNA ligase from Methylocella silvestris (strain DSM 15510 / CIP 108128 / LMG 27833 / NCIMB 13906 / BL2).